Reading from the N-terminus, the 729-residue chain is Fatty acid oxidation complex subunit alpha (729 aa).

Residues 1–189 (MLYKGDTLYL…KIGLVDGVVK (189 aa)) form an enoyl-CoA hydratase/isomerase region. A substrate-binding site is contributed by D296. Residues 311–729 (ETPKQAAVLG…ARPVGDLKTA (419 aa)) form a 3-hydroxyacyl-CoA dehydrogenase region. NAD(+) is bound by residues M324, D343, 400-402 (VVE), K407, and S429. Residue H450 is the For 3-hydroxyacyl-CoA dehydrogenase activity of the active site. N453 serves as a coordination point for NAD(+). Positions 500 and 660 each coordinate substrate. Residues 708-729 (RHNEPYYPPVEPARPVGDLKTA) are disordered.

In the N-terminal section; belongs to the enoyl-CoA hydratase/isomerase family. It in the C-terminal section; belongs to the 3-hydroxyacyl-CoA dehydrogenase family. As to quaternary structure, heterotetramer of two alpha chains (FadB) and two beta chains (FadA).

It catalyses the reaction a (3S)-3-hydroxyacyl-CoA + NAD(+) = a 3-oxoacyl-CoA + NADH + H(+). It carries out the reaction a (3S)-3-hydroxyacyl-CoA = a (2E)-enoyl-CoA + H2O. The catalysed reaction is a 4-saturated-(3S)-3-hydroxyacyl-CoA = a (3E)-enoyl-CoA + H2O. The enzyme catalyses (3S)-3-hydroxybutanoyl-CoA = (3R)-3-hydroxybutanoyl-CoA. It catalyses the reaction a (3Z)-enoyl-CoA = a 4-saturated (2E)-enoyl-CoA. It carries out the reaction a (3E)-enoyl-CoA = a 4-saturated (2E)-enoyl-CoA. It participates in lipid metabolism; fatty acid beta-oxidation. In terms of biological role, involved in the aerobic and anaerobic degradation of long-chain fatty acids via beta-oxidation cycle. Catalyzes the formation of 3-oxoacyl-CoA from enoyl-CoA via L-3-hydroxyacyl-CoA. It can also use D-3-hydroxyacyl-CoA and cis-3-enoyl-CoA as substrate. This Escherichia coli O81 (strain ED1a) protein is Fatty acid oxidation complex subunit alpha.